Here is a 410-residue protein sequence, read N- to C-terminus: Calsequestrin-2 (410 aa).

The first 19 residues, 1 to 19, serve as a signal peptide directing secretion; that stretch reads MKRTHLFIAGLYLLASCRA. Positions 221–242 are calcium regulated hydrophobic site; that stretch reads MDEPIAIPDKPYTEEELVEFVK. Residue Tyr-282 is modified to Phosphotyrosine. N-linked (GlcNAc...) asparagine glycans are attached at residues Asn-335 and Asn-395. The segment at 364–410 is disordered; it reads DVLSGKINTEDDDNEEGDDGDDDEDDDDDDGNNSDEESNDDSDDDDE. The segment covering 373–410 has biased composition (acidic residues); it reads EDDDNEEGDDGDDDEDDDDDDGNNSDEESNDDSDDDDE. 3 positions are modified to phosphoserine; by CK2: Ser-397, Ser-401, and Ser-405.

It belongs to the calsequestrin family. As to quaternary structure, interacts with ASPH. Monomer, homodimer and homooligomer. Mostly monomeric in the absence of calcium. Forms higher oligomers in a calcium-dependent manner. Dimers associate to form tetramers, that then form linear homomer chains. Interacts with TRDN. In terms of processing, phosphorylation in the C-terminus, probably by CK2, moderately increases calcium buffering capacity. N-glycosylated. Detected in heart muscle (at protein level).

It is found in the sarcoplasmic reticulum lumen. Its function is as follows. Calsequestrin is a high-capacity, moderate affinity, calcium-binding protein and thus acts as an internal calcium store in muscle. Calcium ions are bound by clusters of acidic residues at the protein surface, especially at the interface between subunits. Can bind around 60 Ca(2+) ions. Regulates the release of lumenal Ca(2+) via the calcium release channel RYR2; this plays an important role in triggering muscle contraction. Plays a role in excitation-contraction coupling in the heart and in regulating the rate of heart beats. The protein is Calsequestrin-2 (CASQ2) of Canis lupus familiaris (Dog).